The sequence spans 593 residues: Metal-response element-binding transcription factor 2 (593 aa).

The disordered stretch occupies residues 1–35 (MRDSTGAGNSLVHKRSPLRRNQKTPTSLTKLSLQD). Residues 12–22 (VHKRSPLRRNQ) show a composition bias toward basic residues. Polar residues predominate over residues 23-32 (KTPTSLTKLS). Thr-24 is subject to Phosphothreonine. The Tudor domain maps to 44–101 (CKFEEGQDVLARWSDGLFYLGTIKKINILKQSCFIIFEDSSKSWVLWKDIQTGATGSG). 2 PHD-type zinc fingers span residues 102-157 (EMVC…CVFA) and 201-255 (QCYC…CSSG). A Glycyl lysine isopeptide (Lys-Gly) (interchain with G-Cter in SUMO2) cross-link involves residue Lys-360. Over residues 360–374 (KAEKEPEGTSHEFKI) the composition is skewed to basic and acidic residues. Disordered stretches follow at residues 360–411 (KAEK…PYTR) and 424–486 (KESI…TRTG). The segment covering 445 to 454 (TAHSSNTSDV) has biased composition (polar residues). Position 452 is a phosphoserine (Ser-452). The segment covering 459–471 (ASSAKETTSSSIS) has biased composition (low complexity). Lys-522 is covalently cross-linked (Glycyl lysine isopeptide (Lys-Gly) (interchain with G-Cter in SUMO2)).

Belongs to the Polycomblike family. Associates with the PRC2 complex, which consists of the core components EED, EZH1 or EZH2, SUZ12, and RBBP4, and various combinations of accessory subunits including AEBP2, JARID2, PHF19, MTF2 and EPOP. Forms a dimeric PRC2.1 (class 1, PRC-PCL) complex consisting of at least SUZ12, RBBP4, and PHF19 or MTF2; PHF19 and MTF2 stabilize the dimeric structure which enhances PRC2 interaction with chromatin.

Its subcellular location is the nucleus. Polycomb group (PcG) protein that specifically binds histone H3 trimethylated at 'Lys-36' (H3K36me3) and recruits the PRC2 complex, thus enhancing PRC2 H3K27me3 methylation activity. Regulates the transcriptional networks during embryonic stem cell self-renewal and differentiation. Promotes recruitment of the PRC2 complex to the inactive X chromosome in differentiating XX ES cells and PRC2 recruitment to target genes in undifferentiated ES cells. Required to repress Hox genes by enhancing H3K27me3 methylation of the PRC2 complex. In some conditions may act as an inhibitor of PRC2 activity: able to activate the CDKN2A gene and promote cellular senescence by suppressing the catalytic activity of the PRC2 complex locally. Binds to the metal-regulating-element (MRE) of MT1A gene promoter. The polypeptide is Metal-response element-binding transcription factor 2 (MTF2) (Homo sapiens (Human)).